Consider the following 196-residue polypeptide: Orotate phosphoribosyltransferase (196 aa).

5-phospho-alpha-D-ribose 1-diphosphate-binding positions include Arg102, Lys103, Lys106, His108, and 129–137; that span reads EDVVTTGGS. Residues Thr133 and Arg161 each contribute to the orotate site.

This sequence belongs to the purine/pyrimidine phosphoribosyltransferase family. PyrE subfamily. As to quaternary structure, homodimer. It depends on Mg(2+) as a cofactor.

The catalysed reaction is orotidine 5'-phosphate + diphosphate = orotate + 5-phospho-alpha-D-ribose 1-diphosphate. Its pathway is pyrimidine metabolism; UMP biosynthesis via de novo pathway; UMP from orotate: step 1/2. Catalyzes the transfer of a ribosyl phosphate group from 5-phosphoribose 1-diphosphate to orotate, leading to the formation of orotidine monophosphate (OMP). This Prochlorococcus marinus (strain MIT 9303) protein is Orotate phosphoribosyltransferase.